The primary structure comprises 376 residues: Cyclin-dependent kinase 9 (376 aa).

A Protein kinase domain is found at 19 to 319 (YERLAKIGQG…SDDALNHDFF (301 aa)). ATP is bound by residues 25–33 (IGQGTFGEV) and lysine 48. Aspartate 153 acts as the Proton acceptor in catalysis. The segment at 345 to 376 (PPRRRGGHMPQQPANQARNPAATNQSEFDRVF) is disordered. Low complexity predominate over residues 354 to 369 (PQQPANQARNPAATNQ).

It belongs to the protein kinase superfamily. CMGC Ser/Thr protein kinase family. CDC2/CDKX subfamily. In terms of assembly, associates with cyclin-T to form P-TEFb.

The protein resides in the nucleus. It catalyses the reaction L-seryl-[protein] + ATP = O-phospho-L-seryl-[protein] + ADP + H(+). The catalysed reaction is L-threonyl-[protein] + ATP = O-phospho-L-threonyl-[protein] + ADP + H(+). It carries out the reaction [DNA-directed RNA polymerase] + ATP = phospho-[DNA-directed RNA polymerase] + ADP + H(+). Functionally, member of the cyclin-dependent kinase pair (CDK9/cyclin-T) complex, also called positive transcription elongation factor B (P-TEFb), which is proposed to facilitate the transition from abortive to production elongation by phosphorylating the CTD (C-terminal domain) of the large subunit of RNA polymerase II (RNAP II) and SUPT5H. The sequence is that of Cyclin-dependent kinase 9 (cdk9) from Xenopus tropicalis (Western clawed frog).